Consider the following 488-residue polypeptide: Lysine--tRNA ligase (488 aa).

Mg(2+) is bound by residues Glu397 and Glu404.

The protein belongs to the class-II aminoacyl-tRNA synthetase family. As to quaternary structure, homodimer. The cofactor is Mg(2+).

Its subcellular location is the cytoplasm. It catalyses the reaction tRNA(Lys) + L-lysine + ATP = L-lysyl-tRNA(Lys) + AMP + diphosphate. The sequence is that of Lysine--tRNA ligase (lysS) from Mycoplasmopsis fermentans (strain ATCC 19989 / NBRC 14854 / NCTC 10117 / PG18) (Mycoplasma fermentans).